The chain runs to 240 residues: Protein OPG176 (240 aa).

The protein belongs to the orthopoxvirus OPG176 family. In terms of assembly, tetramer. Interacts with host MYD88, TRF4, TICAM2 and MAL.

Functionally, BCL2-like protein which disrupts the host immune response by inhibiting the TLR4 signaling pathway leading to NF-kappa-B activation. Acts close to the plasma membrane and targets several host TIR-domain containing adapter proteins including MYD88, TIRAP, TRIF and TICAM2. In turn, blocks the host NF-kappa-B and TRIF-mediated IRF3 activation. The polypeptide is Protein OPG176 (OPG176) (Cynomys gunnisoni (Gunnison's prairie dog)).